The chain runs to 828 residues: Neurotrophin receptor-interacting factor 1 (828 aa).

Residues Val-14–Pro-85 enclose the KRAB 1 domain. A Glycyl lysine isopeptide (Lys-Gly) (interchain with G-Cter in ubiquitin) cross-link involves residue Lys-15. In terms of domain architecture, SCAN box spans Arg-158–Ser-240. Positions Val-280–Glu-370 constitute a KRAB 2 domain. Disordered regions lie at residues Arg-328–Thr-355, Asn-377–Thr-490, and Gln-575–Ser-611. Polar residues predominate over residues Pro-345–Thr-355. A compositionally biased stretch (basic and acidic residues) spans Glu-384 to Glu-394. The segment covering Lys-418–Arg-433 has biased composition (basic residues). Polar residues predominate over residues Arg-458–Glu-478. Basic residues predominate over residues Ser-589–Gly-599. Basic and acidic residues predominate over residues Ser-600–Ser-611. 5 C2H2-type zinc fingers span residues Cys-684–His-706, Tyr-712–His-734, Phe-740–His-762, Tyr-768–His-790, and Tyr-796–His-818.

This sequence belongs to the krueppel C2H2-type zinc-finger protein family. Interacts with NGFR/p75(NTR). Interacts (via KRAB 1 domain) with TRAF6. Interacts (when ubiquitinated at Lys-15) with SQSTM1/p62. Ubiquitinated by TRAF6 at Lys-15 through 'Lys-63'-linked polyubiquitination. 'Lys-63'-linked polyubiquitination occurs in response to NGFR/p75(NTR) cleavage by gamma-secretase and promotes binding with the ICD cleavage product of NGFR/p75(NTR), followed by translocation into the nucleus and subsequent apoptosis. Ubiquitously expressed at low level. Expressed at higher level in testis.

It is found in the cytoplasm. Its subcellular location is the nucleus. In terms of biological role, transcription regulator involved in NGFR/p75(NTR)-mediated apoptosis. Essential component of the NGFR/p75(NTR) apoptotic pathway: upon ligand-binding and subsequent cleavage of NGFR/p75(NTR), binds to the intracellular domain (ICD) cleavage product of NGFR/p75(NTR), translocates to the nucleus and induces apoptosis, possibly by regulating expression of key regulators of apoptosis. Induces NGFR/p75(NTR)-mediated apoptosis in retina and sympathetic neurons. May also regulate expression of neuronal cholesterol biosynthesis genes. Probably acts as a transcription repressor: specifically binds to the 3'-end of zinc-finger coding genes and recruiting chromatin-modifying proteins such as SETDB1 and TRIM28/KAP1, leading to transcription repression. This Mus musculus (Mouse) protein is Neurotrophin receptor-interacting factor 1 (Nrif1).